Here is a 295-residue protein sequence, read N- to C-terminus: Bis(5'-nucleosyl)-tetraphosphatase, symmetrical (295 aa).

Residues 271-295 (LSIEHPRHTHTPRRKAKKRHKRSPK) form a disordered region. The span at 277 to 295 (RHTHTPRRKAKKRHKRSPK) shows a compositional bias: basic residues.

Belongs to the Ap4A hydrolase family.

The enzyme catalyses P(1),P(4)-bis(5'-adenosyl) tetraphosphate + H2O = 2 ADP + 2 H(+). Hydrolyzes diadenosine 5',5'''-P1,P4-tetraphosphate to yield ADP. The chain is Bis(5'-nucleosyl)-tetraphosphatase, symmetrical from Xylella fastidiosa (strain M23).